The primary structure comprises 245 residues: tRNA (guanine-N(1)-)-methyltransferase (245 aa).

Residues glycine 111 and 131 to 136 (MGDYVL) each bind S-adenosyl-L-methionine.

The protein belongs to the RNA methyltransferase TrmD family. In terms of assembly, homodimer.

It localises to the cytoplasm. The enzyme catalyses guanosine(37) in tRNA + S-adenosyl-L-methionine = N(1)-methylguanosine(37) in tRNA + S-adenosyl-L-homocysteine + H(+). Functionally, specifically methylates guanosine-37 in various tRNAs. The protein is tRNA (guanine-N(1)-)-methyltransferase of Staphylococcus epidermidis (strain ATCC 35984 / DSM 28319 / BCRC 17069 / CCUG 31568 / BM 3577 / RP62A).